The following is a 435-amino-acid chain: Beta-arrestin arr-1 (435 aa).

The tract at residues 358–382 is disordered; it reads LTHSKPPESPERTDRGLPSIEATNG. Basic and acidic residues predominate over residues 362–372; the sequence is KPPESPERTDR. Residues 390-394 carry the Clathrin box motif; the sequence is LIQLH. A [DE]-X(1,2)-F-X-X-[FL]-X-X-X-R motif motif is present at residues 404 to 414; sequence DLIFEDFARMR. The tract at residues 416 to 435 is disordered; that stretch reads HGNDSEDQPSPSANLPPSLL. Residues 424–435 show a composition bias toward low complexity; sequence PSPSANLPPSLL.

This sequence belongs to the arrestin family. As to quaternary structure, component of a complex composed of arr-1, daf-18 and mpz-1. Within the complex, interacts (via C-terminus) with mpz-1 (via PDZ domain) and phosphatase daf-18. May interact (via C-terminus) with clathrin chc-1 and beta-2 adaptin (AP2) apb-1. As to expression, expressed in head neurons, nerve ring and ventral nerve cord (at protein level). Expressed in the nervous system including the nerve ring and the ventral and dorsal nerve cords. Highly expressed in amphid chemosensory neurons AWA, AWB, AWC, ADL and ASH, and in hermaphrodite specific neuron HSN. Also expressed in the intestine.

Its subcellular location is the perikaryon. The protein resides in the cell projection. It localises to the dendrite. Its function is as follows. Adapter protein required for olfactory adaptation and recovery to volatile odorants, probably by desensitization of G-protein coupled receptors (GPCR). May play a role in clathrin-mediated GPCR endocytosis. Acts as a positive regulator of insulin-like daf-2 signaling pathway probably by forming a complex with mpz-1 and phosphatase daf-18 likely resulting in daf-18 inhibition. Involved in egg-laying. The chain is Beta-arrestin arr-1 from Caenorhabditis elegans.